Consider the following 247-residue polypeptide: Probable transcriptional regulatory protein Gbem_3313 (247 aa).

Belongs to the TACO1 family.

The protein resides in the cytoplasm. In Citrifermentans bemidjiense (strain ATCC BAA-1014 / DSM 16622 / JCM 12645 / Bem) (Geobacter bemidjiensis), this protein is Probable transcriptional regulatory protein Gbem_3313.